A 1101-amino-acid polypeptide reads, in one-letter code: Lysylphosphatidylglycerol biosynthesis bifunctional protein LysX (1101 aa).

A phosphatidylglycerol lysyltransferase region spans residues 1–601 (MTATRLVRAH…RLHSDGTAPD (601 aa)). The next 7 helical transmembrane spans lie at 18–38 (VPAA…LASV), 60–80 (FPDT…ALAA), 84–104 (IAWW…VTGL), 113–133 (DVGE…LLLA), 151–171 (VTLV…LELF), 183–200 (YALN…GAFS), and 207–227 (VNAL…VVLF). Positions 602-1101 (RIGPVGDGAD…TLPFPLAKPR (500 aa)) are lysine--tRNA ligase. Residues 662 to 740 (VTVSGRVLRA…SVLVTRWRLI (79 aa)) constitute a DNA-binding region (OB). Residues Asp-1013 and Glu-1020 each coordinate Mg(2+).

The protein in the N-terminal section; belongs to the LPG synthetase family. This sequence in the C-terminal section; belongs to the class-II aminoacyl-tRNA synthetase family. The cofactor is Mg(2+).

It localises to the cell membrane. The catalysed reaction is tRNA(Lys) + L-lysine + ATP = L-lysyl-tRNA(Lys) + AMP + diphosphate. The enzyme catalyses L-lysyl-tRNA(Lys) + a 1,2-diacyl-sn-glycero-3-phospho-(1'-sn-glycerol) = a 1,2-diacyl-sn-glycero-3-phospho-1'-(3'-O-L-lysyl)-sn-glycerol + tRNA(Lys). Functionally, catalyzes the production of L-lysyl-tRNA(Lys)transfer and the transfer of a lysyl group from L-lysyl-tRNA(Lys) to membrane-bound phosphatidylglycerol (PG), which produces lysylphosphatidylglycerol (LPG), one of the components of the bacterial membrane with a positive net charge. LPG synthesis contributes to the resistance to cationic antimicrobial peptides (CAMPs) and likely protects M.tuberculosis against the CAMPs produced by competiting microorganisms (bacteriocins). In fact, the modification of anionic phosphatidylglycerol with positively charged L-lysine results in repulsion of the peptides. This Mycolicibacterium gilvum (strain PYR-GCK) (Mycobacterium gilvum (strain PYR-GCK)) protein is Lysylphosphatidylglycerol biosynthesis bifunctional protein LysX (lysX).